A 979-amino-acid polypeptide reads, in one-letter code: Peptidyl-glycine alpha-amidating monooxygenase (979 aa).

An N-terminal signal peptide occupies residues 1 to 24 (MAGRARSRLLLLLGLLALQSSCLA). The tract at residues 1–497 (MAGRARSRLL…EGPWEPELAG (497 aa)) is peptidylglycine alpha-hydroxylating monooxygenase. The propeptide occupies 25 to 34 (FRSPLSVFKR). The Intragranular segment spans residues 35-869 (FKETTRSFSN…KKLIKDPGSG (835 aa)). Intrachain disulfides connect Cys46/Cys185, Cys80/Cys125, Cys113/Cys130, Cys226/Cys333, and Cys292/Cys314. His106 and His107 together coordinate Cu(2+). Positions 171, 241, 243, and 313 each coordinate Cu(2+). Positions 498–823 (DFHVEEALEW…SRLEVEHRSV (326 aa)) are peptidyl-alpha-hydroxyglycine alpha-amidating lyase. NHL repeat units lie at residues 501 to 544 (VEEA…NSFD), 570 to 611 (AEIL…LEPR), 620 to 665 (LGRS…FSPS), and 673 to 717 (GEES…FKTD). Residue Val520 coordinates Ca(2+). Arg533 contacts a protein. His585 serves as a coordination point for Zn(2+). Residue Leu587 coordinates Ca(2+). A disulfide bond links Cys634 and Cys655. Tyr654 is a binding site for a protein. His690 serves as a coordination point for Zn(2+). A disulfide bridge links Cys702 with Cys713. Arg706 lines the a protein pocket. An N-linked (GlcNAc...) asparagine glycan is attached at Asn765. The NHL 5 repeat unit spans residues 769-812 (GEIIDVFKPVRKHFDMPHDIVASEDGTVYIGDAHTNTVWKFTLT). A Zn(2+)-binding site is contributed by His786. Asp787 contacts Ca(2+). A helical membrane pass occupies residues 870-893 (VPVVLITTLLVIPVVVLLAIAMFI). At 894-979 (RWKKSRAFGD…APLPTPAPSS (86 aa)) the chain is on the cytoplasmic side. Ser924, Ser925, Ser935, and Ser948 each carry phosphoserine. Residues 931 to 948 (NFFASRKGYSRKGFDRVS) form an interaction with RASSF9 region. A disordered region spans residues 943–979 (GFDRVSTEGSDQEKDEDDGSESEEEYSAPLPTPAPSS). Phosphothreonine is present on Thr949. At Ser952 the chain carries Phosphoserine; by UHMK1. Over residues 955-968 (EKDEDDGSESEEEY) the composition is skewed to acidic residues. At Ser964 the chain carries Phosphoserine.

The protein in the C-terminal section; belongs to the peptidyl-alpha-hydroxyglycine alpha-amidating lyase family. In the N-terminal section; belongs to the copper type II ascorbate-dependent monooxygenase family. As to quaternary structure, monomer. Interacts with RASSF9. Requires Zn(2+) as cofactor. Cu(2+) is required as a cofactor.

The protein resides in the cytoplasmic vesicle. The protein localises to the secretory vesicle membrane. It carries out the reaction a [peptide]-C-terminal glycine + 2 L-ascorbate + O2 = a [peptide]-C-terminal (2S)-2-hydroxyglycine + 2 monodehydro-L-ascorbate radical + H2O. It catalyses the reaction a [peptide]-C-terminal (2S)-2-hydroxyglycine = a [peptide]-C-terminal amide + glyoxylate. The enzyme catalyses N-dodecanoylglycine + 2 L-ascorbate + O2 = N-dodecanoyl-(2S)-hydroxyglycine + 2 monodehydro-L-ascorbate radical + H2O. The catalysed reaction is N-dodecanoyl-(2S)-hydroxyglycine = dodecanamide + glyoxylate. It carries out the reaction N-(9Z,12Z,15Z)-octadecatrienoylglycine + 2 L-ascorbate + O2 = N-(9Z,12Z,15Z)-octadecatrienoyl-(2S)-hydroxyglycine + 2 monodehydro-L-ascorbate radical + H2O. It catalyses the reaction N-(9Z,12Z,15Z)-octadecatrienoyl-(2S)-hydroxyglycine = (9Z,12Z,15Z)-octadecatrienamide + glyoxylate. The enzyme catalyses N-(9Z-octadecenoyl)glycine + 2 L-ascorbate + O2 = N-(9Z-octadecenoyl)-(2S)-hydroxyglycine + 2 monodehydro-L-ascorbate radical + H2O. The catalysed reaction is N-(9Z-octadecenoyl)-(2S)-hydroxyglycine = (9Z)-octadecenamide + glyoxylate. It carries out the reaction N-tetradecanoylglycine + 2 L-ascorbate + O2 = N-tetradecanoyl-(2S)-hydroxyglycine + 2 monodehydro-L-ascorbate radical + H2O. It catalyses the reaction N-tetradecanoyl-(2S)-hydroxyglycine = tetradecamide + glyoxylate. The enzyme catalyses N-decanoylglycine + 2 L-ascorbate + O2 = N-decanoyl-(2S)-hydroxyglycine + 2 monodehydro-L-ascorbate radical + H2O. The catalysed reaction is N-decanoyl-(2S)-hydroxyglycine = decanamide + glyoxylate. It carries out the reaction N-octanoylglycine + 2 L-ascorbate + O2 = N-octanoyl-(2S)-hydroxyglycine + 2 monodehydro-L-ascorbate radical + H2O. It catalyses the reaction N-octanoyl-(2S)-hydroxyglycine = octanamide + glyoxylate. With respect to regulation, PAM activity is inhibited by EDTA, phenylglyoxal and diethyl pyrocarbonate. PAL activity is stimulated by cadmium and inhibited by mercury. In terms of biological role, bifunctional enzyme that catalyzes amidation of the C-terminus of proteins. Alpha-amidation is present at the C-terminus of many endocrine hormones and neuropeptides and is required for their activity. C-terminal amidation also takes place in response to protein fragmentation triggered by oxidative stress, promoting degradation of amidated protein fragments by the proteasome. Alpha-amidation involves two sequential reactions, both of which are catalyzed by separate catalytic domains of the enzyme. The first step, catalyzed by peptidyl alpha-hydroxylating monooxygenase (PHM) domain, is the copper-, ascorbate-, and O2- dependent stereospecific hydroxylation (with S stereochemistry) at the alpha-carbon (C-alpha) of the C-terminal glycine of the peptidylglycine substrate. The second step, catalyzed by the peptidylglycine amidoglycolate lyase (PAL) domain, is the zinc-dependent cleavage of the N-C-alpha bond, producing the alpha-amidated peptide and glyoxylate. Similarly, catalyzes the two-step conversion of an N-fatty acylglycine to a primary fatty acid amide and glyoxylate. The protein is Peptidyl-glycine alpha-amidating monooxygenase of Mus musculus (Mouse).